A 132-amino-acid polypeptide reads, in one-letter code: Small ribosomal subunit protein uS8 (132 aa).

It belongs to the universal ribosomal protein uS8 family. As to quaternary structure, part of the 30S ribosomal subunit. Contacts proteins S5 and S12.

In terms of biological role, one of the primary rRNA binding proteins, it binds directly to 16S rRNA central domain where it helps coordinate assembly of the platform of the 30S subunit. The polypeptide is Small ribosomal subunit protein uS8 (Lactobacillus johnsonii (strain CNCM I-12250 / La1 / NCC 533)).